A 209-amino-acid chain; its full sequence is Uracil phosphoribosyltransferase (209 aa).

Residues R79, R104, and 131–139 (DPMLATGGS) each bind 5-phospho-alpha-D-ribose 1-diphosphate. Residues I194 and 199 to 201 (GDA) contribute to the uracil site. Residue D200 coordinates 5-phospho-alpha-D-ribose 1-diphosphate.

It belongs to the UPRTase family. Requires Mg(2+) as cofactor.

The enzyme catalyses UMP + diphosphate = 5-phospho-alpha-D-ribose 1-diphosphate + uracil. The protein operates within pyrimidine metabolism; UMP biosynthesis via salvage pathway; UMP from uracil: step 1/1. Its activity is regulated as follows. Allosterically activated by GTP. Its function is as follows. Catalyzes the conversion of uracil and 5-phospho-alpha-D-ribose 1-diphosphate (PRPP) to UMP and diphosphate. This Clostridioides difficile (strain 630) (Peptoclostridium difficile) protein is Uracil phosphoribosyltransferase.